The sequence spans 228 residues: 2,3-bisphosphoglycerate-dependent phosphoglycerate mutase (228 aa).

Substrate is bound by residues 8 to 15, 21 to 22, Arg-60, 87 to 90, Lys-98, 114 to 115, and 183 to 184; these read RHGLSEWN, TG, ERHY, RR, and GN. The active-site Tele-phosphohistidine intermediate is the His-9. The Proton donor/acceptor role is filled by Glu-87.

It belongs to the phosphoglycerate mutase family. BPG-dependent PGAM subfamily.

The enzyme catalyses (2R)-2-phosphoglycerate = (2R)-3-phosphoglycerate. It participates in carbohydrate degradation; glycolysis; pyruvate from D-glyceraldehyde 3-phosphate: step 3/5. Its function is as follows. Catalyzes the interconversion of 2-phosphoglycerate and 3-phosphoglycerate. The sequence is that of 2,3-bisphosphoglycerate-dependent phosphoglycerate mutase from Enterococcus faecalis (strain ATCC 700802 / V583).